The primary structure comprises 736 residues: MDCNCFDPLLPADELLMKYQYISDFFIAVAYFSIPIELVYFVQKSAVFPYRWVLVQFGAFIVLCGATHLINLWTSTPHTRTVAMVMTTAKFSTAAVSCATAVMLVHIIPDLLSVKTRELFLKNKAAELDREMGLIRTQEETGRYVRMLTHEIRSTLDRHTILKTTLVELGRALQLEECALWMPTRTGVELQLSYTLHHQNPVGFTVPIQLPVINQVFSANCAVKISPNSAVARLRPTRKYIPGEVVAVRVPLLHLSNFQTNDWPELSPKSYALMVLMLPSNSARQWHVHELELVDVVADQVAVALSHAAILEESMRARDLLIEQNVALDLARREAETAVRARNDFLGVMNHEMRTPMHAVVALSSLLQESELIPEQRLMVETILKSSNLLATLINDVLDLSRLEDGSLQLDVGTFNLHALFREVLNLIKPVAAVKKLFVTLSLSSDFPEVAIGDEKRLMQILLNVVGNAVKFSKEGSVSVSAVNAKSESLIDPRAPEFFPVQSENHFYLRVQVKDTGSGINPQDFPKLFCKFAQNQEPATKNSAGTGLGLAICKRFVNLMEGHIWIESEGVGKGSTAIFIVKLGIPGRLNESKLPFTAGLPANHMQMTFQGLKVLVMDDNGFSRMVTKSLLVHLGCDVTTIGSGDECLRILTREHKVLIMDASITGMNCYDVAVSVHEKFGKRLERPLIVALTGNTDQVTKENCLRVGMDGVILKPVSIDKMRSVLSGLLEHGTVL.

3 helical membrane passes run isoleucine 22–valine 42, valine 53–tryptophan 73, and alanine 94–valine 114. Cu cation is bound by residues cysteine 64 and histidine 68. Positions aspartate 157–leucine 305 constitute a GAF domain. A Histidine kinase domain is found at valine 348–isoleucine 585. At histidine 351 the chain carries Phosphohistidine; by autocatalysis. The 118-residue stretch at lysine 613–leucine 730 folds into the Response regulatory domain. The residue at position 661 (aspartate 661) is a 4-aspartylphosphate.

It belongs to the ethylene receptor family. Homodimer; disulfide-linked. Cu cation is required as a cofactor. Post-translationally, activation probably requires a transfer of a phosphate group between a His in the transmitter domain and an Asp of the receiver domain. In terms of tissue distribution, leaves, flowers and fruits.

The protein localises to the endoplasmic reticulum membrane. The catalysed reaction is ATP + protein L-histidine = ADP + protein N-phospho-L-histidine.. In terms of biological role, may act early in the ethylene signal transduction pathway, possibly as an ethylene receptor, or as a regulator of the pathway. This chain is Ethylene receptor 2 (ETR2), found in Solanum lycopersicum (Tomato).